The following is a 351-amino-acid chain: Heat-inducible transcription repressor HrcA (351 aa).

Belongs to the HrcA family.

In terms of biological role, negative regulator of class I heat shock genes (grpE-dnaK-dnaJ and groELS operons). Prevents heat-shock induction of these operons. This is Heat-inducible transcription repressor HrcA from Acetivibrio thermocellus (strain ATCC 27405 / DSM 1237 / JCM 9322 / NBRC 103400 / NCIMB 10682 / NRRL B-4536 / VPI 7372) (Clostridium thermocellum).